The primary structure comprises 507 residues: Prolyl carboxy peptidase like protein 5 (507 aa).

Residues 1–16 (MNIFISLAILIATTHC) form the signal peptide. N125 is a glycosylation site (N-linked (GlcNAc...) asparagine). Catalysis depends on S172, which acts as the Charge relay system. N332 and N407 each carry an N-linked (GlcNAc...) asparagine glycan. Active-site charge relay system residues include D439 and H466.

This sequence belongs to the peptidase S28 family.

This is Prolyl carboxy peptidase like protein 5 from Caenorhabditis elegans.